The primary structure comprises 658 residues: Putative endo-beta-N-acetylglucosaminidase (658 aa).

An N-terminal signal peptide occupies residues 1–23; that stretch reads MKKVRFIFLALLFFLASPEGAMA. Cell wall-binding repeat units follow at residues 42 to 63, 65 to 84, 86 to 105, 124 to 145, 147 to 166, 185 to 206, 208 to 227, 229 to 248, 250 to 271, 273 to 292, 294 to 315, 317 to 336, and 338 to 359; these read ANEW…DANY, ENEW…GGYM, KSEW…DGKM, IEDW…DGQH, EKEW…GGYL, QQGW…NGNY, DKEW…GGYM, ANEW…DGKM, EKEW…GGYM, and ANEW…DGKI.

The protein belongs to the glycosyl hydrolase 73 family.

It is found in the secreted. It carries out the reaction an N(4)-(oligosaccharide-(1-&gt;3)-[oligosaccharide-(1-&gt;6)]-beta-D-Man-(1-&gt;4)-beta-D-GlcNAc-(1-&gt;4)-alpha-D-GlcNAc)-L-asparaginyl-[protein] + H2O = an oligosaccharide-(1-&gt;3)-[oligosaccharide-(1-&gt;6)]-beta-D-Man-(1-&gt;4)-D-GlcNAc + N(4)-(N-acetyl-beta-D-glucosaminyl)-L-asparaginyl-[protein]. Plays an important role in cell wall degradation and cell separation. This Streptococcus pneumoniae serotype 4 (strain ATCC BAA-334 / TIGR4) protein is Putative endo-beta-N-acetylglucosaminidase (lytB).